A 381-amino-acid chain; its full sequence is Probable envelope ADP,ATP carrier protein, chloroplastic (381 aa).

A chloroplast-targeting transit peptide spans Met-1 to Pro-26. 5 consecutive transmembrane segments (helical) span residues Leu-78–Gly-98, Leu-154–Lys-179, Leu-191–Leu-211, Ile-237–Val-257, and Leu-281–Val-301. Solcar repeat units lie at residues Pro-85–Leu-177, Leu-185–Ser-268, and Ser-279–Leu-359. Arg-159 contributes to the ADP binding site. An ADP-binding site is contributed by Arg-302. Residues Gly-334–Ile-360 form a helical membrane-spanning segment.

It belongs to the mitochondrial carrier (TC 2.A.29) family.

The protein localises to the plastid. Its subcellular location is the chloroplast membrane. Transports adenine nucleotides. In Arabidopsis thaliana (Mouse-ear cress), this protein is Probable envelope ADP,ATP carrier protein, chloroplastic (EAAC).